Consider the following 228-residue polypeptide: 2-C-methyl-D-erythritol 4-phosphate cytidylyltransferase (228 aa).

The protein belongs to the IspD/TarI cytidylyltransferase family. IspD subfamily.

It carries out the reaction 2-C-methyl-D-erythritol 4-phosphate + CTP + H(+) = 4-CDP-2-C-methyl-D-erythritol + diphosphate. It functions in the pathway isoprenoid biosynthesis; isopentenyl diphosphate biosynthesis via DXP pathway; isopentenyl diphosphate from 1-deoxy-D-xylulose 5-phosphate: step 2/6. Functionally, catalyzes the formation of 4-diphosphocytidyl-2-C-methyl-D-erythritol from CTP and 2-C-methyl-D-erythritol 4-phosphate (MEP). The protein is 2-C-methyl-D-erythritol 4-phosphate cytidylyltransferase of Actinobacillus pleuropneumoniae serotype 3 (strain JL03).